The primary structure comprises 376 residues: MRYADPSANRDLLGSRTLLFIFICAFALVTLLQQILYGRNYIKRYFEFYEGPFEYNSTRCLELRHEILEVKVLSMVKQSELFDRWKSLQMCKWAMNISEANQFKSTLSRCCNAPAFLFTTQKNTPLGTKLKYEVDTSGIYHINQEIFRMFPKDMPYYRSQFKKCAVVGNGGILKNSRCGREINSADFVFRCNLPPISEKYTMDVGVKTDVVTVNPSIITERFHKLEKWRRPFYRVLQVYENASVLLPAFYNTRNTDVSIRVKYVLDDFESPQAVYYFHPQYLVNVSRYWLSLGVRAKRISTGLILVTAALELCEEVHLFGFWAFPMNPSGLYITHHYYDNVKPRPGFHAMPSEIFNFLHLHSRGILRVHTGTCSCC.

The Cytoplasmic portion of the chain corresponds to 1-17 (MRYADPSANRDLLGSRT). A helical; Signal-anchor for type II membrane protein membrane pass occupies residues 18–38 (LLFIFICAFALVTLLQQILYG). Over 39–376 (RNYIKRYFEF…RVHTGTCSCC (338 aa)) the chain is Lumenal. 2 N-linked (GlcNAc...) asparagine glycosylation sites follow: Asn-56 and Asn-96. Cystine bridges form between Cys-164–Cys-313 and Cys-178–Cys-373. Substrate is bound by residues Asn-192 and 214-216 (NPS). Residues Asn-241 and Asn-284 are each glycosylated (N-linked (GlcNAc...) asparagine). Residue 300–302 (STG) participates in substrate binding. His-348 acts as the Proton donor/acceptor in catalysis.

This sequence belongs to the glycosyltransferase 29 family. In terms of tissue distribution, expressed in fetal and adult brain, adult heart and skeletal muscle. Expressed in fetal and adult brain, not detected in adult heart and skeletal muscle.

It localises to the golgi apparatus membrane. The enzyme catalyses a ganglioside GT1b (d18:1(4E)) + CMP-N-acetyl-beta-neuraminate = a ganglioside GQ1b (d18:1(4E)) + CMP + H(+). The catalysed reaction is a ganglioside GD3 (d18:1(4E)) + CMP-N-acetyl-beta-neuraminate = a ganglioside GT3 (d18:1(4E)) + CMP + H(+). It carries out the reaction a ganglioside GD1a (d18:1(4E)) + CMP-N-acetyl-beta-neuraminate = a ganglioside GT1a (d18:1(4E)) + CMP + H(+). It catalyses the reaction a ganglioside GM1b (d18:1(4E)) + CMP-N-acetyl-beta-neuraminate = a ganglioside GD1c (d18:1(4E)) + CMP + H(+). The enzyme catalyses a ganglioside GQ1c (d18:1(4E)) + CMP-N-acetyl-beta-neuraminate = a ganglioside GP1c (d18:1(4E)) + CMP + H(+). It functions in the pathway protein modification; protein glycosylation. Its function is as follows. Involved in the synthesis of gangliosides GD1c, GT1a, GQ1b, GP1c and GT3 from GD1a, GT1b, GM1b and GD3 respectively. The polypeptide is Alpha-2,8-sialyltransferase 8E (Homo sapiens (Human)).